Reading from the N-terminus, the 56-residue chain is Conotoxin reg3.9 (56 aa).

A signal peptide spans 1–8 (LLFPLSAL). Residues 1–22 (LLFPLSALPLDGDQPADQPAER) form a disordered region. A propeptide spanning residues 9 to 40 (PLDGDQPADQPAERMQDISPEQNFWFDLVERG) is cleaved from the precursor. Intrachain disulfides connect Cys-41–Cys-55, Cys-42–Cys-53, and Cys-47–Cys-56.

It belongs to the conotoxin M superfamily. In terms of tissue distribution, expressed by the venom duct.

It is found in the secreted. This chain is Conotoxin reg3.9, found in Conus regius (Crown cone).